The primary structure comprises 1078 residues: Isoleucine--tRNA ligase (1078 aa).

Residues 52 to 62 (PTANGKPALHH) carry the 'HIGH' region motif. A 'KMSKS' region motif is present at residues 637–641 (KMSKS). K640 contributes to the ATP binding site.

This sequence belongs to the class-I aminoacyl-tRNA synthetase family. IleS type 2 subfamily. As to quaternary structure, monomer. Zn(2+) is required as a cofactor.

It is found in the cytoplasm. The enzyme catalyses tRNA(Ile) + L-isoleucine + ATP = L-isoleucyl-tRNA(Ile) + AMP + diphosphate. Its function is as follows. Catalyzes the attachment of isoleucine to tRNA(Ile). As IleRS can inadvertently accommodate and process structurally similar amino acids such as valine, to avoid such errors it has two additional distinct tRNA(Ile)-dependent editing activities. One activity is designated as 'pretransfer' editing and involves the hydrolysis of activated Val-AMP. The other activity is designated 'posttransfer' editing and involves deacylation of mischarged Val-tRNA(Ile). The chain is Isoleucine--tRNA ligase from Deinococcus radiodurans (strain ATCC 13939 / DSM 20539 / JCM 16871 / CCUG 27074 / LMG 4051 / NBRC 15346 / NCIMB 9279 / VKM B-1422 / R1).